Here is a 252-residue protein sequence, read N- to C-terminus: MSSFAQKSILKLKTKRGLNGKNIIEEMFFTPPLKIISPLEDEDIAEIMLISVSAGLLKDDCQDIQIHIGKESKIRLISQSYEKIHDTQDGYASKHTQITIEENAFLDYAPLPILPFKDSSFKNTTDIYLSKNARLHYSEIICAGRVAMGEIFDFSELSSRLRIYKENHLVFFENMNLKPAQMAMQNICLFDKYTHALSMVIFDDLIEVQALEQKIKNSSLNVGISTNNGGIIIKALDNQSERLLQFKKDLAL.

It belongs to the UreD family. As to quaternary structure, ureH, UreF and UreG form a complex that acts as a GTP-hydrolysis-dependent molecular chaperone, activating the urease apoprotein by helping to assemble the nickel containing metallocenter of UreC. The UreE protein probably delivers the nickel.

The protein resides in the cytoplasm. Functionally, required for maturation of urease via the functional incorporation of the urease nickel metallocenter. In Helicobacter hepaticus (strain ATCC 51449 / 3B1), this protein is Urease accessory protein UreH.